The sequence spans 495 residues: tRNA modification GTPase MnmE (495 aa).

Arginine 28, glutamate 89, and lysine 128 together coordinate (6S)-5-formyl-5,6,7,8-tetrahydrofolate. Residues 223–417 (GVRIVLGGCP…LRAQTLHLLH (195 aa)) enclose the TrmE-type G domain. Asparagine 233 lines the K(+) pocket. Residues 233–238 (NAGKSS), 252–258 (SSVPGTT), and 277–280 (DTAG) each bind GTP. Serine 237 serves as a coordination point for Mg(2+). Positions 252, 254, and 257 each coordinate K(+). Threonine 258 serves as a coordination point for Mg(2+). Lysine 495 provides a ligand contact to (6S)-5-formyl-5,6,7,8-tetrahydrofolate.

The protein belongs to the TRAFAC class TrmE-Era-EngA-EngB-Septin-like GTPase superfamily. TrmE GTPase family. As to quaternary structure, homodimer. Heterotetramer of two MnmE and two MnmG subunits. It depends on K(+) as a cofactor.

It localises to the cytoplasm. Exhibits a very high intrinsic GTPase hydrolysis rate. Involved in the addition of a carboxymethylaminomethyl (cmnm) group at the wobble position (U34) of certain tRNAs, forming tRNA-cmnm(5)s(2)U34. The protein is tRNA modification GTPase MnmE of Treponema pallidum (strain Nichols).